Reading from the N-terminus, the 338-residue chain is DNA-directed RNA polymerase subunit alpha (338 aa).

The interval 1 to 234 (MIHKNWQELI…DQLSIFVNFD (234 aa)) is alpha N-terminal domain (alpha-NTD). An alpha C-terminal domain (alpha-CTD) region spans residues 250–338 (FNPLLLKKVD…ELAKKYEDNF (89 aa)).

Belongs to the RNA polymerase alpha chain family. In terms of assembly, homodimer. The RNAP catalytic core consists of 2 alpha, 1 beta, 1 beta' and 1 omega subunit. When a sigma factor is associated with the core the holoenzyme is formed, which can initiate transcription.

It carries out the reaction RNA(n) + a ribonucleoside 5'-triphosphate = RNA(n+1) + diphosphate. Functionally, DNA-dependent RNA polymerase catalyzes the transcription of DNA into RNA using the four ribonucleoside triphosphates as substrates. The chain is DNA-directed RNA polymerase subunit alpha from Jannaschia sp. (strain CCS1).